Reading from the N-terminus, the 201-residue chain is Imidazole glycerol phosphate synthase subunit HisH (201 aa).

Residues 1–201 (MIAIIDYGAG…LLKRYEEMIR (201 aa)) form the Glutamine amidotransferase type-1 domain. Residue cysteine 79 is the Nucleophile of the active site. Residues histidine 181 and glutamate 183 contribute to the active site.

In terms of assembly, heterodimer of HisH and HisF.

It is found in the cytoplasm. The catalysed reaction is 5-[(5-phospho-1-deoxy-D-ribulos-1-ylimino)methylamino]-1-(5-phospho-beta-D-ribosyl)imidazole-4-carboxamide + L-glutamine = D-erythro-1-(imidazol-4-yl)glycerol 3-phosphate + 5-amino-1-(5-phospho-beta-D-ribosyl)imidazole-4-carboxamide + L-glutamate + H(+). The enzyme catalyses L-glutamine + H2O = L-glutamate + NH4(+). Its pathway is amino-acid biosynthesis; L-histidine biosynthesis; L-histidine from 5-phospho-alpha-D-ribose 1-diphosphate: step 5/9. Functionally, IGPS catalyzes the conversion of PRFAR and glutamine to IGP, AICAR and glutamate. The HisH subunit catalyzes the hydrolysis of glutamine to glutamate and ammonia as part of the synthesis of IGP and AICAR. The resulting ammonia molecule is channeled to the active site of HisF. This chain is Imidazole glycerol phosphate synthase subunit HisH, found in Oceanobacillus iheyensis (strain DSM 14371 / CIP 107618 / JCM 11309 / KCTC 3954 / HTE831).